Consider the following 497-residue polypeptide: MSQAGSSPLYAAIDLGSNSFHMLVVRHIDGSVQTMAKIKRKVRLAAGLDEHNSLSMEAMQRGWDCLSLFAERLQDIPTQNIRIVGTATLRTATNVDVFLEKANQILGQPIEVISGEEEAATIYKGVAHTSGGSGRRLVVDIGGASTELIIGEGFEAKALTSLKMGCVTWLENFFKDRQLNARNFEAAIEGAKQTIKPILEQYTDLGWDVCVGASGTVQALQEIMLAQGMDEVITHSKLKRLQKQAMLADHLEELDIEGLTLERALVFPSGLSILIAIFELLEIDAMTLAGGALREGLVYEMVDELRQNDIRARTICSVQSRYQLDCQYGEQVATLAGKLLEQAGGDEWIAEPQGKVLLETTAKLHEIGLTIDFKKGGEHSAYLLQNLDLPGYTRAQKFFIGEIARRYREQLSSLPEQHAISGTSAKRVLRLLRLAVLLTHRRNPSLEPQVELLAEGDKLTLSIDAKWLEANPLTAAELEIESNRQTDIGWPLTITAC.

Belongs to the GppA/Ppx family. GppA subfamily.

The enzyme catalyses guanosine 3'-diphosphate 5'-triphosphate + H2O = guanosine 3',5'-bis(diphosphate) + phosphate + H(+). The protein operates within purine metabolism; ppGpp biosynthesis; ppGpp from GTP: step 2/2. In terms of biological role, catalyzes the conversion of pppGpp to ppGpp. Guanosine pentaphosphate (pppGpp) is a cytoplasmic signaling molecule which together with ppGpp controls the 'stringent response', an adaptive process that allows bacteria to respond to amino acid starvation, resulting in the coordinated regulation of numerous cellular activities. The polypeptide is Guanosine-5'-triphosphate,3'-diphosphate pyrophosphatase (Vibrio parahaemolyticus serotype O3:K6 (strain RIMD 2210633)).